The sequence spans 139 residues: Putative general secretion pathway protein B (139 aa).

The chain crosses the membrane as a helical span at residues 28–48; the sequence is IIYVICLLLICLWFAGMVLVG. The segment at 93-139 is disordered; it reads VEEEDDPGVAVENAPSSSEDEENTVEESEEKAGLRERVKNALNELER. A compositionally biased stretch (acidic residues) spans 110-121; that stretch reads SEDEENTVEESE. Basic and acidic residues predominate over residues 122–139; it reads EKAGLRERVKNALNELER.

It is found in the cell membrane. Its function is as follows. Part of a cryptic operon that encodes proteins involved in type II secretion pathway in other organisms, but is not expressed in strain K12 under standard laboratory conditions. May play a regulatory role under conditions of derepressed gsp gene expression. The sequence is that of Putative general secretion pathway protein B from Escherichia coli (strain K12).